We begin with the raw amino-acid sequence, 382 residues long: UDP-4-amino-4-deoxy-L-arabinose--oxoglutarate aminotransferase (382 aa).

At Lys182 the chain carries N6-(pyridoxal phosphate)lysine.

It belongs to the DegT/DnrJ/EryC1 family. ArnB subfamily. In terms of assembly, homodimer. Pyridoxal 5'-phosphate is required as a cofactor.

The catalysed reaction is UDP-4-amino-4-deoxy-beta-L-arabinose + 2-oxoglutarate = UDP-beta-L-threo-pentopyranos-4-ulose + L-glutamate. It participates in nucleotide-sugar biosynthesis; UDP-4-deoxy-4-formamido-beta-L-arabinose biosynthesis; UDP-4-deoxy-4-formamido-beta-L-arabinose from UDP-alpha-D-glucuronate: step 2/3. It functions in the pathway bacterial outer membrane biogenesis; lipopolysaccharide biosynthesis. Functionally, catalyzes the conversion of UDP-4-keto-arabinose (UDP-Ara4O) to UDP-4-amino-4-deoxy-L-arabinose (UDP-L-Ara4N). The modified arabinose is attached to lipid A and is required for resistance to polymyxin and cationic antimicrobial peptides. This is UDP-4-amino-4-deoxy-L-arabinose--oxoglutarate aminotransferase from Yersinia enterocolitica serotype O:8 / biotype 1B (strain NCTC 13174 / 8081).